A 687-amino-acid chain; its full sequence is DNA ligase (687 aa).

Residues Asp-33–Asp-37, Ser-83–Leu-84, and Glu-113 contribute to the NAD(+) site. The N6-AMP-lysine intermediate role is filled by Lys-115. Arg-136, Glu-176, Lys-292, and Lys-316 together coordinate NAD(+). The Zn(2+) site is built by Cys-410, Cys-413, Cys-429, and Cys-435. The 89-residue stretch at Ser-599–Thr-687 folds into the BRCT domain.

This sequence belongs to the NAD-dependent DNA ligase family. LigA subfamily. Requires Mg(2+) as cofactor. Mn(2+) is required as a cofactor.

It carries out the reaction NAD(+) + (deoxyribonucleotide)n-3'-hydroxyl + 5'-phospho-(deoxyribonucleotide)m = (deoxyribonucleotide)n+m + AMP + beta-nicotinamide D-nucleotide.. In terms of biological role, DNA ligase that catalyzes the formation of phosphodiester linkages between 5'-phosphoryl and 3'-hydroxyl groups in double-stranded DNA using NAD as a coenzyme and as the energy source for the reaction. It is essential for DNA replication and repair of damaged DNA. This Mycobacterium marinum (strain ATCC BAA-535 / M) protein is DNA ligase.